The following is a 928-amino-acid chain: Zinc metalloproteinase nas-39 (928 aa).

Positions 1–30 are cleaved as a signal peptide; the sequence is MRFSANIAIIVNIIFLFIVVEFVLPTFIRS. In terms of domain architecture, Peptidase M12A spans 48–247; sequence AATAKKERIW…RQTKKLYKCA (200 aa). N-linked (GlcNAc...) asparagine glycosylation is found at Asn-69 and Asn-87. 4 disulfide bridges follow: Cys-90–Cys-246, Cys-111–Cys-133, Cys-113–Cys-114, and Cys-249–Cys-268. His-141 provides a ligand contact to Zn(2+). Residue Glu-142 is part of the active site. Zn(2+) contacts are provided by His-145 and His-151. CUB domains follow at residues 249–359 and 360–476; these read CGGT…YAIC and GGPI…FTKE. Asn-283 carries an N-linked (GlcNAc...) asparagine glycan. 6 cysteine pairs are disulfide-bonded: Cys-359–Cys-385, Cys-412–Cys-439, Cys-480–Cys-491, Cys-487–Cys-500, Cys-502–Cys-515, and Cys-519–Cys-545. In terms of domain architecture, EGF-like 1; calcium-binding spans 477 to 516; sequence LNECATDKNICHHYCVNTVGGFKCACRVGYSLSSNGFSCD. In terms of domain architecture, CUB 3 spans 519 to 625; sequence CGGYLKASNG…DGFFANFIAD (107 aa). 2 N-linked (GlcNAc...) asparagine glycosylation sites follow: Asn-527 and Asn-560. 8 cysteine pairs are disulfide-bonded: Cys-573–Cys-587, Cys-629–Cys-640, Cys-636–Cys-649, Cys-651–Cys-664, Cys-669–Cys-695, Cys-722–Cys-744, Cys-782–Cys-812, and Cys-840–Cys-863. The EGF-like 2; calcium-binding domain maps to 626 to 665; that stretch reads FDECQNDNAGCEHTCQNRLGSYVCTCNPGYILAEDKHNCK. 2 CUB domains span residues 669–781 and 782–900; these read CFFE…YTSL and CGGR…YREA. Asn-694 carries an N-linked (GlcNAc...) asparagine glycan. Residues 895–928 are disordered; that stretch reads AEYREAPRSSSTKRTFVSKTRHSPLEEPIHDRNE. A compositionally biased stretch (polar residues) spans 902–912; that stretch reads RSSSTKRTFVS. The segment covering 917-928 has biased composition (basic and acidic residues); that stretch reads SPLEEPIHDRNE.

It depends on Zn(2+) as a cofactor. In terms of tissue distribution, expressed in pharyngeal, vulva and body wall muscles, intestine and several neurons.

The protein localises to the secreted. Metalloprotease. The protein is Zinc metalloproteinase nas-39 of Caenorhabditis elegans.